Reading from the N-terminus, the 155-residue chain is SsrA-binding protein (155 aa).

Belongs to the SmpB family.

It is found in the cytoplasm. In terms of biological role, required for rescue of stalled ribosomes mediated by trans-translation. Binds to transfer-messenger RNA (tmRNA), required for stable association of tmRNA with ribosomes. tmRNA and SmpB together mimic tRNA shape, replacing the anticodon stem-loop with SmpB. tmRNA is encoded by the ssrA gene; the 2 termini fold to resemble tRNA(Ala) and it encodes a 'tag peptide', a short internal open reading frame. During trans-translation Ala-aminoacylated tmRNA acts like a tRNA, entering the A-site of stalled ribosomes, displacing the stalled mRNA. The ribosome then switches to translate the ORF on the tmRNA; the nascent peptide is terminated with the 'tag peptide' encoded by the tmRNA and targeted for degradation. The ribosome is freed to recommence translation, which seems to be the essential function of trans-translation. This Oenococcus oeni (strain ATCC BAA-331 / PSU-1) protein is SsrA-binding protein.